We begin with the raw amino-acid sequence, 669 residues long: DNA ligase (669 aa).

NAD(+) is bound by residues 34–38 (DAEYD), 83–84 (SL), and glutamate 114. Catalysis depends on lysine 116, which acts as the N6-AMP-lysine intermediate. Arginine 137, glutamate 171, lysine 287, and lysine 311 together coordinate NAD(+). Cysteine 405, cysteine 408, cysteine 423, and cysteine 428 together coordinate Zn(2+). The region spanning 591–669 (NVESYFAGKT…EERFLQELNK (79 aa)) is the BRCT domain.

Belongs to the NAD-dependent DNA ligase family. LigA subfamily. Mg(2+) is required as a cofactor. Requires Mn(2+) as cofactor.

The catalysed reaction is NAD(+) + (deoxyribonucleotide)n-3'-hydroxyl + 5'-phospho-(deoxyribonucleotide)m = (deoxyribonucleotide)n+m + AMP + beta-nicotinamide D-nucleotide.. Its function is as follows. DNA ligase that catalyzes the formation of phosphodiester linkages between 5'-phosphoryl and 3'-hydroxyl groups in double-stranded DNA using NAD as a coenzyme and as the energy source for the reaction. It is essential for DNA replication and repair of damaged DNA. The polypeptide is DNA ligase (Bacillus mycoides (strain KBAB4) (Bacillus weihenstephanensis)).